We begin with the raw amino-acid sequence, 334 residues long: Heat shock factor 2-binding protein (334 aa).

Positions 14–51 are interaction with BRME1; that stretch reads MGTKEEFVKVRKKDLERLTTEVMQIRDFLPRILNGEVL. The stretch at 49–122 forms a coiled coil; the sequence is EVLESFQKLK…LLQQAEYCTE (74 aa). The tract at residues 83–334 is interaction with BRCA2; the sequence is ARLETVQADN…EDLRTLEHNV (252 aa).

Associates with HSF2. The interaction seems to occur between the trimerization domain of HSF2 and the N-terminal hydrophilic region of HSF2BP. Interacts (via C-terminus) with BNC1. Interacts (via N-terminus) with BRCA2 and BRME1; the interactions are direct and allow the formation of a ternary complex. The complex BRME1:HSF2BP:BRCA2 interacts with SPATA22, MEIOB and RAD51. Post-translationally, sumoylated by UBE2I in response to MEKK1-mediated stimuli. As to expression, testis specific. Overexpressed in some tumors.

It is found in the cytoplasm. The protein resides in the chromosome. Meiotic recombination factor component of recombination bridges involved in meiotic double-strand break repair. Modulates the localization of recombinases DMC1:RAD51 to meiotic double-strand break (DSB) sites through the interaction with BRCA2 and its recruitment during meiotic recombination. Indispensable for the DSB repair, homologous synapsis, and crossover formation that are needed for progression past metaphase I, is essential for spermatogenesis and male fertility. Required for proper recombinase recruitment in female meiosis. Inhibits BNC1 transcriptional activity during spermatogenesis, probably by sequestering it in the cytoplasm. May be involved in modulating HSF2 activation in testis. The chain is Heat shock factor 2-binding protein from Homo sapiens (Human).